The primary structure comprises 177 residues: Peptidyl-tRNA hydrolase (177 aa).

Residue Y12 coordinates tRNA. The active-site Proton acceptor is the H17. F63, N65, and N111 together coordinate tRNA.

The protein belongs to the PTH family. In terms of assembly, monomer.

The protein resides in the cytoplasm. It catalyses the reaction an N-acyl-L-alpha-aminoacyl-tRNA + H2O = an N-acyl-L-amino acid + a tRNA + H(+). Hydrolyzes ribosome-free peptidyl-tRNAs (with 1 or more amino acids incorporated), which drop off the ribosome during protein synthesis, or as a result of ribosome stalling. In terms of biological role, catalyzes the release of premature peptidyl moieties from peptidyl-tRNA molecules trapped in stalled 50S ribosomal subunits, and thus maintains levels of free tRNAs and 50S ribosomes. This is Peptidyl-tRNA hydrolase from Buchnera aphidicola subsp. Acyrthosiphon pisum (strain 5A).